The following is a 459-amino-acid chain: Ribulose bisphosphate carboxylase large chain (459 aa).

Residue K4 is modified to N6,N6,N6-trimethyllysine. Positions 113 and 163 each coordinate substrate. The active-site Proton acceptor is the K165. K167 lines the substrate pocket. K191, D193, and E194 together coordinate Mg(2+). Position 191 is an N6-carboxylysine (K191). The Proton acceptor role is filled by H284. Substrate is bound by residues R285, H317, and S369.

Belongs to the RuBisCO large chain family. Type I subfamily. In terms of assembly, heterohexadecamer of 8 large chains and 8 small chains; disulfide-linked. The disulfide link is formed within the large subunit homodimers. The cofactor is Mg(2+). In terms of processing, the disulfide bond which can form in the large chain dimeric partners within the hexadecamer appears to be associated with oxidative stress and protein turnover.

The protein localises to the plastid. It is found in the chloroplast. The catalysed reaction is 2 (2R)-3-phosphoglycerate + 2 H(+) = D-ribulose 1,5-bisphosphate + CO2 + H2O. It carries out the reaction D-ribulose 1,5-bisphosphate + O2 = 2-phosphoglycolate + (2R)-3-phosphoglycerate + 2 H(+). RuBisCO catalyzes two reactions: the carboxylation of D-ribulose 1,5-bisphosphate, the primary event in carbon dioxide fixation, as well as the oxidative fragmentation of the pentose substrate in the photorespiration process. Both reactions occur simultaneously and in competition at the same active site. The sequence is that of Ribulose bisphosphate carboxylase large chain from Nypa fruticans (Nypa palm).